A 310-amino-acid chain; its full sequence is O-acetylserine sulfhydrylase (310 aa).

Position 44 is an N6-(pyridoxal phosphate)lysine (lysine 44). Residues asparagine 74, 178 to 182, and serine 266 each bind pyridoxal 5'-phosphate; that span reads GTGGT.

The protein belongs to the cysteine synthase/cystathionine beta-synthase family. In terms of assembly, homodimer. Requires pyridoxal 5'-phosphate as cofactor.

The catalysed reaction is O-acetyl-L-serine + hydrogen sulfide = L-cysteine + acetate. The protein operates within amino-acid biosynthesis; L-cysteine biosynthesis; L-cysteine from L-serine: step 2/2. In terms of biological role, catalyzes the conversion of O-acetylserine (OAS) to cysteine through the elimination of acetate and addition of hydrogen sulfide. The polypeptide is O-acetylserine sulfhydrylase (cysK) (Mycobacterium bovis (strain ATCC BAA-935 / AF2122/97)).